Consider the following 424-residue polypeptide: Tyrosine--tRNA ligase (424 aa).

Y37 is a binding site for L-tyrosine. The short motif at 42-51 is the 'HIGH' region element; it reads PTADSLHLGH. L-tyrosine is bound by residues Y175 and Q179. Residues 235-239 carry the 'KMSKS' region motif; the sequence is KFGKT. An ATP-binding site is contributed by K238. An S4 RNA-binding domain is found at 357–414; it reads ADLMQALVDAELQPSRGQARKTIASNAVTINGEKQSDPEYIFNDEDRLFGRYTLLRRG.

Belongs to the class-I aminoacyl-tRNA synthetase family. TyrS type 1 subfamily. Homodimer.

It localises to the cytoplasm. It carries out the reaction tRNA(Tyr) + L-tyrosine + ATP = L-tyrosyl-tRNA(Tyr) + AMP + diphosphate + H(+). Its function is as follows. Catalyzes the attachment of tyrosine to tRNA(Tyr) in a two-step reaction: tyrosine is first activated by ATP to form Tyr-AMP and then transferred to the acceptor end of tRNA(Tyr). This is Tyrosine--tRNA ligase from Salmonella agona (strain SL483).